The primary structure comprises 310 residues: MSSKLLTIQLLEELVHAAELNQEGKTADYIPELANVNQELTAIAVQTLGEKTLAYSNNPLHPVTLQSTGKMIPLIGLLEEFGADQLFEWVKVEPSGDDFASITRLEQFGPKPSNPMLNAGAIALCSRIPGVGEQQFRWLEHWVQKLFNQRLSINPLVFASEKRTGNRNRALAYLLKSRNNLGADVHETLDLYFALCSYEAMLDQMLYLPTLLANSGKDSDTGEQILSMETCKITLAIMATCGLYDETGTHMVKTGMPAKSGVSGYTIAVVPGKAGIVVLSPRVNAKGNSIRGEIMLEGLSKAMNWHFALP.

Substrate contacts are provided by Ser67, Asn118, Glu161, Asn168, Tyr192, Tyr244, and Val262.

Belongs to the glutaminase family. Homotetramer.

The catalysed reaction is L-glutamine + H2O = L-glutamate + NH4(+). This Legionella pneumophila (strain Lens) protein is Glutaminase.